A 285-amino-acid chain; its full sequence is Pantothenate synthetase (285 aa).

Residue 30–37 (MGFLHEGH) coordinates ATP. The Proton donor role is filled by H37. Residue Q61 participates in (R)-pantoate binding. Q61 is a binding site for beta-alanine. 148 to 151 (GKKD) provides a ligand contact to ATP. Q154 contacts (R)-pantoate. ATP is bound by residues V177 and 185-188 (LSSR).

The protein belongs to the pantothenate synthetase family. In terms of assembly, homodimer.

It localises to the cytoplasm. The catalysed reaction is (R)-pantoate + beta-alanine + ATP = (R)-pantothenate + AMP + diphosphate + H(+). Its pathway is cofactor biosynthesis; (R)-pantothenate biosynthesis; (R)-pantothenate from (R)-pantoate and beta-alanine: step 1/1. In terms of biological role, catalyzes the condensation of pantoate with beta-alanine in an ATP-dependent reaction via a pantoyl-adenylate intermediate. The polypeptide is Pantothenate synthetase (Leptospira interrogans serogroup Icterohaemorrhagiae serovar copenhageni (strain Fiocruz L1-130)).